A 278-amino-acid polypeptide reads, in one-letter code: Undecaprenyl-diphosphatase (278 aa).

A run of 6 helical transmembrane segments spans residues 44 to 64 (FLEMFNIVIQLGAILAVMTIY), 84 to 104 (WQLWAKVVIACIPSILIAVPL), 112 to 132 (FNFMVPIAIALIVYGIAFIWI), 187 to 207 (SVAADFTFFLGIPTMFGYSGL), 224 to 244 (VWILLVASVTAYLVSLVVIRF), and 254 to 274 (FTVFGYYRIILGAILLVYAFI).

This sequence belongs to the UppP family.

The protein resides in the cell membrane. It carries out the reaction di-trans,octa-cis-undecaprenyl diphosphate + H2O = di-trans,octa-cis-undecaprenyl phosphate + phosphate + H(+). Its function is as follows. Catalyzes the dephosphorylation of undecaprenyl diphosphate (UPP). Confers resistance to bacitracin. The sequence is that of Undecaprenyl-diphosphatase from Streptococcus suis (strain 98HAH33).